A 268-amino-acid polypeptide reads, in one-letter code: Aliphatic sulfonates import ATP-binding protein SsuB 2 (268 aa).

The ABC transporter domain occupies 16–230; the sequence is VQLRNVVRQF…DSGQAGFQSI (215 aa). ATP is bound at residue 48–55; it reads GASGSGKT.

The protein belongs to the ABC transporter superfamily. Aliphatic sulfonates importer (TC 3.A.1.17.2) family. As to quaternary structure, the complex is composed of two ATP-binding proteins (SsuB), two transmembrane proteins (SsuC) and a solute-binding protein (SsuA).

The protein localises to the cell inner membrane. It catalyses the reaction ATP + H2O + aliphatic sulfonate-[sulfonate-binding protein]Side 1 = ADP + phosphate + aliphatic sulfonateSide 2 + [sulfonate-binding protein]Side 1.. Its function is as follows. Part of the ABC transporter complex SsuABC involved in aliphatic sulfonates import. Responsible for energy coupling to the transport system. The polypeptide is Aliphatic sulfonates import ATP-binding protein SsuB 2 (Pseudomonas savastanoi pv. phaseolicola (strain 1448A / Race 6) (Pseudomonas syringae pv. phaseolicola (strain 1448A / Race 6))).